Reading from the N-terminus, the 85-residue chain is ATP synthase subunit c (85 aa).

2 helical membrane-spanning segments follow: residues 10–30 (IAVS…FGIL) and 53–73 (FIVA…ALLF).

This sequence belongs to the ATPase C chain family. In terms of assembly, F-type ATPases have 2 components, F(1) - the catalytic core - and F(0) - the membrane proton channel. F(1) has five subunits: alpha(3), beta(3), gamma(1), delta(1), epsilon(1). F(0) has three main subunits: a(1), b(2) and c(10-14). The alpha and beta chains form an alternating ring which encloses part of the gamma chain. F(1) is attached to F(0) by a central stalk formed by the gamma and epsilon chains, while a peripheral stalk is formed by the delta and b chains.

It localises to the cell inner membrane. Functionally, f(1)F(0) ATP synthase produces ATP from ADP in the presence of a proton or sodium gradient. F-type ATPases consist of two structural domains, F(1) containing the extramembraneous catalytic core and F(0) containing the membrane proton channel, linked together by a central stalk and a peripheral stalk. During catalysis, ATP synthesis in the catalytic domain of F(1) is coupled via a rotary mechanism of the central stalk subunits to proton translocation. Its function is as follows. Key component of the F(0) channel; it plays a direct role in translocation across the membrane. A homomeric c-ring of between 10-14 subunits forms the central stalk rotor element with the F(1) delta and epsilon subunits. This chain is ATP synthase subunit c, found in Idiomarina loihiensis (strain ATCC BAA-735 / DSM 15497 / L2-TR).